The chain runs to 326 residues: dTDP-4-dehydro-6-deoxy-D-allose reductase (326 aa).

Residues Gly-15 to Gly-21 and Met-129 to Ser-132 each bind NAD(+). Tyr-160 serves as the catalytic Proton donor/acceptor. NAD(+)-binding positions include Lys-164 and Pro-187–Val-190.

The protein belongs to the NAD(P)-dependent epimerase/dehydratase family.

It catalyses the reaction dTDP-6-deoxy-alpha-D-allose + NAD(+) = dTDP-4-dehydro-6-deoxy-alpha-D-allose + NADH + H(+). The enzyme catalyses dTDP-6-deoxy-alpha-D-allose + NADP(+) = dTDP-4-dehydro-6-deoxy-alpha-D-allose + NADPH + H(+). Catalyzes the stereospecific reduction of the C-4 keto group of dTDP-4-dehydro-6-deoxy-D-allose, leading to dTDP-6-deoxy-D-allose, an intermediate in the biosynthesis of the mycinose moiety of dihydrochalcomycin (GERI-155) antibiotic. Cannot directly reduce dTDP-4-dehydro-6-deoxyglucose, and thus acts after the epimerization step catalyzed by GerF. The polypeptide is dTDP-4-dehydro-6-deoxy-D-allose reductase (gerKI) (Streptomyces sp).